A 179-amino-acid chain; its full sequence is ATP synthase subunit delta (179 aa).

Belongs to the ATPase delta chain family. As to quaternary structure, F-type ATPases have 2 components, F(1) - the catalytic core - and F(0) - the membrane proton channel. F(1) has five subunits: alpha(3), beta(3), gamma(1), delta(1), epsilon(1). F(0) has three main subunits: a(1), b(2) and c(10-14). The alpha and beta chains form an alternating ring which encloses part of the gamma chain. F(1) is attached to F(0) by a central stalk formed by the gamma and epsilon chains, while a peripheral stalk is formed by the delta and b chains.

The protein localises to the cell membrane. F(1)F(0) ATP synthase produces ATP from ADP in the presence of a proton or sodium gradient. F-type ATPases consist of two structural domains, F(1) containing the extramembraneous catalytic core and F(0) containing the membrane proton channel, linked together by a central stalk and a peripheral stalk. During catalysis, ATP synthesis in the catalytic domain of F(1) is coupled via a rotary mechanism of the central stalk subunits to proton translocation. In terms of biological role, this protein is part of the stalk that links CF(0) to CF(1). It either transmits conformational changes from CF(0) to CF(1) or is implicated in proton conduction. This chain is ATP synthase subunit delta, found in Clostridium botulinum (strain Alaska E43 / Type E3).